The primary structure comprises 556 residues: Glucose-6-phosphate isomerase (556 aa).

Glu-360 functions as the Proton donor in the catalytic mechanism. Catalysis depends on residues His-391 and Lys-519.

Belongs to the GPI family.

Its subcellular location is the cytoplasm. The catalysed reaction is alpha-D-glucose 6-phosphate = beta-D-fructose 6-phosphate. It participates in carbohydrate biosynthesis; gluconeogenesis. Its pathway is carbohydrate degradation; glycolysis; D-glyceraldehyde 3-phosphate and glycerone phosphate from D-glucose: step 2/4. Functionally, catalyzes the reversible isomerization of glucose-6-phosphate to fructose-6-phosphate. This is Glucose-6-phosphate isomerase from Acinetobacter baumannii (strain SDF).